Reading from the N-terminus, the 195-residue chain is MTQPPASTSGIMGTLSSWNLKILQINQLHLVHWNAVKFENFEDAALEENGLAVIGVFLKISETSGSPVSTGRPKPLARKLRPAQKHWVLQSRPFLSSQVQENCKVTYFHRKHWVRIRPLRTTPPSWDYTRICIQREMVPARIRVLREMVPEAWRCFPNRLPLLSNIRPDFSKAPLAYVKRWLWTARHPHSLSAAW.

121–122 is a binding site for substrate; it reads TT.

The protein belongs to the alpha-carbonic anhydrase family.

This Homo sapiens (Human) protein is Putative inactive carbonic anhydrase 5B-like protein (CA5BP1).